The chain runs to 816 residues: H(+)/Cl(-) exchange transporter 5 (816 aa).

Topologically, residues 1–124 (MAMWQGAMDN…WALIHSVSDA (124 aa)) are cytoplasmic. Transmembrane regions (helical) follow at residues 125 to 162 (FSGWLLMLLIGLLSGSLAGLIDISAHWMTDLKEGICTG) and 208 to 231 (VNYFMYVLWALLFAFLAVSLVKVF). A Selectivity filter part_1 motif is present at residues 237-241 (GSGIP). Chloride is bound at residue Ser238. An intramembrane region (helical) is located at residues 240–247 (IPEIKTIL). 2 consecutive transmembrane segments (helical) span residues 256-275 (LGKWTLVIKTITLVLAVSSG) and 281-300 (EGPLVHVACCCGNILCHCFN). The Selectivity filter part_2 signature appears at 279-283 (GKEGP). 2 intramembrane regions (helical) span residues 312-324 (VLSAAAAAGVSVA) and 328-336 (PIGGVLFSL). A run of 5 helical transmembrane segments spans residues 348–366 (LWRSFFAALVAAFTLRSIN), 389–414 (LVPFILLGIFGGLWGALFIRTNIAWC), 422–442 (LGKYPVIEVLVVTAITAILAF), 498–518 (MWQLALTLILKIVITIFTFGM), and 523–542 (GLFIPSMAVGAIAGRLLGVG). The short motif at 523-527 (GLFIP) is the Selectivity filter part_3 element. Position 525 (Phe525) interacts with chloride. An intramembrane region (helical) is located at residues 570–584 (GLYAMVGAAACLGGV). An intramembrane region (note=Loop between two helices) is located at residues 585–587 (TRM). An intramembrane region (helical) is located at residues 588 to 599 (TVSLVVIMFELT). An intramembrane region (note=Loop between two helices) is located at residues 600–604 (GGLEY). Residues 605-622 (IVPLMAAAMTSKWVADAL) traverse the membrane as a helical segment. The Cytoplasmic segment spans residues 623–816 (GREGIYDAHI…NQDPDSILFN (194 aa)). Chloride is bound at residue Tyr628. CBS domains are found at residues 656-720 (MKPR…ARKK) and 752-812 (ILDL…DPDS). ATP is bound by residues Thr666, 687–689 (YSG), and 794–797 (TKKD).

It belongs to the chloride channel (TC 2.A.49) family. ClC-5/CLCN5 subfamily. Interacts with NEDD4 and NEDD4L. Ubiquitinated by NEDD4L in the presence of albumin; which promotes endocytosis and proteasomal degradation.

Its subcellular location is the golgi apparatus membrane. The protein localises to the endosome membrane. The protein resides in the cell membrane. It carries out the reaction 2 chloride(in) + H(+)(out) = 2 chloride(out) + H(+)(in). In terms of biological role, proton-coupled chloride transporter. Functions as antiport system and exchanges chloride ions against protons. Important for normal acidification of the endosome lumen. May play an important role in renal tubular function. The CLC channel family contains both chloride channels and proton-coupled anion transporters that exchange chloride or another anion for protons. The absence of conserved gating glutamate residues is typical for family members that function as channels. This Pongo abelii (Sumatran orangutan) protein is H(+)/Cl(-) exchange transporter 5 (CLCN5).